Reading from the N-terminus, the 240-residue chain is Ribonuclease HII (240 aa).

One can recognise an RNase H type-2 domain in the interval G27–D226. D33, E34, and D127 together coordinate a divalent metal cation.

It belongs to the RNase HII family. Mn(2+) serves as cofactor. Requires Mg(2+) as cofactor.

It localises to the cytoplasm. It catalyses the reaction Endonucleolytic cleavage to 5'-phosphomonoester.. In terms of biological role, endonuclease that specifically degrades the RNA of RNA-DNA hybrids. This Frankia casuarinae (strain DSM 45818 / CECT 9043 / HFP020203 / CcI3) protein is Ribonuclease HII.